We begin with the raw amino-acid sequence, 156 residues long: Small ribosomal subunit protein uS7 (156 aa).

The protein belongs to the universal ribosomal protein uS7 family. As to quaternary structure, part of the 30S ribosomal subunit. Contacts proteins S9 and S11.

Functionally, one of the primary rRNA binding proteins, it binds directly to 16S rRNA where it nucleates assembly of the head domain of the 30S subunit. Is located at the subunit interface close to the decoding center, probably blocks exit of the E-site tRNA. The chain is Small ribosomal subunit protein uS7 from Mycolicibacterium gilvum (strain PYR-GCK) (Mycobacterium gilvum (strain PYR-GCK)).